Here is an 82-residue protein sequence, read N- to C-terminus: Myosin light chain alkali (82 aa).

Residues 7–42 (GCYGDFIECLKLYDKEENGTMMLAELQHALLALGES) enclose the EF-hand domain.

Myosin is a hexamer of 2 heavy chains and 4 light chains.

The chain is Myosin light chain alkali (Mlc1) from Drosophila sechellia (Fruit fly).